Consider the following 226-residue polypeptide: 2,3-bisphosphoglycerate-dependent phosphoglycerate mutase (226 aa).

Residues R8–N15, T21–G22, R58, E109–Y112, K120, R136–R137, and G180–N181 contribute to the substrate site. Residue H9 is the Tele-phosphohistidine intermediate of the active site. Catalysis depends on E109, which acts as the Proton donor/acceptor.

It belongs to the phosphoglycerate mutase family. BPG-dependent PGAM subfamily.

The catalysed reaction is (2R)-2-phosphoglycerate = (2R)-3-phosphoglycerate. The protein operates within carbohydrate degradation; glycolysis; pyruvate from D-glyceraldehyde 3-phosphate: step 3/5. Functionally, catalyzes the interconversion of 2-phosphoglycerate and 3-phosphoglycerate. This is 2,3-bisphosphoglycerate-dependent phosphoglycerate mutase from Chlamydia muridarum (strain MoPn / Nigg).